Consider the following 387-residue polypeptide: Exodeoxyribonuclease 7 large subunit (387 aa).

It belongs to the XseA family. As to quaternary structure, heterooligomer composed of large and small subunits.

The protein resides in the cytoplasm. It catalyses the reaction Exonucleolytic cleavage in either 5'- to 3'- or 3'- to 5'-direction to yield nucleoside 5'-phosphates.. Its function is as follows. Bidirectionally degrades single-stranded DNA into large acid-insoluble oligonucleotides, which are then degraded further into small acid-soluble oligonucleotides. This chain is Exodeoxyribonuclease 7 large subunit, found in Campylobacter hominis (strain ATCC BAA-381 / DSM 21671 / CCUG 45161 / LMG 19568 / NCTC 13146 / CH001A).